The chain runs to 204 residues: Somatotropin (204 aa).

The first 17 residues, 1 to 17, serve as a signal peptide directing secretion; it reads MDRVLLLLSVLTLGVSS. Position 18 is a pyrrolidone carboxylic acid (Q18). H36 contributes to the Zn(2+) binding site. A disulfide bridge links C69 with C177. E186 serves as a coordination point for Zn(2+). C194 and C202 are joined by a disulfide.

It belongs to the somatotropin/prolactin family.

Its subcellular location is the secreted. Functionally, growth hormone plays an important role in growth control and is involved in the regulation of several anabolic processes. Implicated as an osmoregulatory substance important for seawater adaptation. The chain is Somatotropin (gh) from Larimichthys crocea (Large yellow croaker).